A 455-amino-acid chain; its full sequence is UDP-N-acetylmuramate--L-alanine ligase (455 aa).

109-115 (GTHGKTT) is a binding site for ATP.

The protein belongs to the MurCDEF family.

The protein localises to the cytoplasm. It carries out the reaction UDP-N-acetyl-alpha-D-muramate + L-alanine + ATP = UDP-N-acetyl-alpha-D-muramoyl-L-alanine + ADP + phosphate + H(+). It functions in the pathway cell wall biogenesis; peptidoglycan biosynthesis. In terms of biological role, cell wall formation. The chain is UDP-N-acetylmuramate--L-alanine ligase from Caldicellulosiruptor saccharolyticus (strain ATCC 43494 / DSM 8903 / Tp8T 6331).